The primary structure comprises 231 residues: 5'-methylthioadenosine/S-adenosylhomocysteine nucleosidase (231 aa).

Residue Glu13 is the Proton acceptor of the active site. Residues Gly79, Met153, and 174–175 (ME) contribute to the substrate site. Asp198 acts as the Proton donor in catalysis.

It belongs to the PNP/UDP phosphorylase family. MtnN subfamily.

The catalysed reaction is S-adenosyl-L-homocysteine + H2O = S-(5-deoxy-D-ribos-5-yl)-L-homocysteine + adenine. The enzyme catalyses S-methyl-5'-thioadenosine + H2O = 5-(methylsulfanyl)-D-ribose + adenine. It carries out the reaction 5'-deoxyadenosine + H2O = 5-deoxy-D-ribose + adenine. It functions in the pathway amino-acid biosynthesis; L-methionine biosynthesis via salvage pathway; S-methyl-5-thio-alpha-D-ribose 1-phosphate from S-methyl-5'-thioadenosine (hydrolase route): step 1/2. Functionally, catalyzes the irreversible cleavage of the glycosidic bond in both 5'-methylthioadenosine (MTA) and S-adenosylhomocysteine (SAH/AdoHcy) to adenine and the corresponding thioribose, 5'-methylthioribose and S-ribosylhomocysteine, respectively. Also cleaves 5'-deoxyadenosine, a toxic by-product of radical S-adenosylmethionine (SAM) enzymes, into 5-deoxyribose and adenine. This Halalkalibacterium halodurans (strain ATCC BAA-125 / DSM 18197 / FERM 7344 / JCM 9153 / C-125) (Bacillus halodurans) protein is 5'-methylthioadenosine/S-adenosylhomocysteine nucleosidase.